The sequence spans 406 residues: Dual-specificity RNA methyltransferase RlmN (406 aa).

Glu121 functions as the Proton acceptor in the catalytic mechanism. The 251-residue stretch at Glu127–Leu377 folds into the Radical SAM core domain. Cysteines 134 and 380 form a disulfide. Residues Cys141, Cys145, and Cys148 each contribute to the [4Fe-4S] cluster site. S-adenosyl-L-methionine-binding positions include Gly206–Glu207, Ser238, Ser260–His262, and Asn337. Cys380 acts as the S-methylcysteine intermediate in catalysis.

It belongs to the radical SAM superfamily. RlmN family. [4Fe-4S] cluster serves as cofactor.

It localises to the cytoplasm. The enzyme catalyses adenosine(2503) in 23S rRNA + 2 reduced [2Fe-2S]-[ferredoxin] + 2 S-adenosyl-L-methionine = 2-methyladenosine(2503) in 23S rRNA + 5'-deoxyadenosine + L-methionine + 2 oxidized [2Fe-2S]-[ferredoxin] + S-adenosyl-L-homocysteine. It carries out the reaction adenosine(37) in tRNA + 2 reduced [2Fe-2S]-[ferredoxin] + 2 S-adenosyl-L-methionine = 2-methyladenosine(37) in tRNA + 5'-deoxyadenosine + L-methionine + 2 oxidized [2Fe-2S]-[ferredoxin] + S-adenosyl-L-homocysteine. In terms of biological role, specifically methylates position 2 of adenine 2503 in 23S rRNA and position 2 of adenine 37 in tRNAs. m2A2503 modification seems to play a crucial role in the proofreading step occurring at the peptidyl transferase center and thus would serve to optimize ribosomal fidelity. The polypeptide is Dual-specificity RNA methyltransferase RlmN (Azorhizobium caulinodans (strain ATCC 43989 / DSM 5975 / JCM 20966 / LMG 6465 / NBRC 14845 / NCIMB 13405 / ORS 571)).